Consider the following 311-residue polypeptide: Homeobox-leucine zipper protein HOX13 (311 aa).

Residues 1-74 (MKRPTSSSRK…PSCGLGEKKR (74 aa)) are disordered. Over residues 35-54 (DEAEMEEVDEEEEEEVDEDM) the composition is skewed to acidic residues. Residues 69 to 128 (LGEKKRRLALEQVRALERSFDTDNKLDPDRKARIARDLGLQPRQVAVWFQNRRARWKTKQ) constitute a DNA-binding region (homeobox). The leucine-zipper stretch occupies residues 127–171 (KQLERDFAALRARHDALRADCDALRRDKDALAAEIRELREKLPTK).

It belongs to the HD-ZIP homeobox family. Class I subfamily. In terms of tissue distribution, expressed in seedlings, roots, stems, leaf sheaths and blades and panicles.

Its subcellular location is the nucleus. Its function is as follows. Probable transcription factor. This is Homeobox-leucine zipper protein HOX13 (HOX13) from Oryza sativa subsp. japonica (Rice).